The chain runs to 409 residues: 1-deoxy-D-xylulose 5-phosphate reductoisomerase (409 aa).

NADPH is bound by residues Thr5, Gly6, Ser7, Ile8, Gly31, Asn33, and Asn122. 1-deoxy-D-xylulose 5-phosphate is bound at residue Lys123. NADPH is bound at residue Glu124. Asp148 lines the Mn(2+) pocket. Positions 149, 150, 186, and 209 each coordinate 1-deoxy-D-xylulose 5-phosphate. Mn(2+) is bound at residue Glu150. Gly215 lines the NADPH pocket. Ser222, Asn227, Lys228, and Glu231 together coordinate 1-deoxy-D-xylulose 5-phosphate. Position 231 (Glu231) interacts with Mn(2+).

Belongs to the DXR family. The cofactor is Mg(2+). Requires Mn(2+) as cofactor.

It catalyses the reaction 2-C-methyl-D-erythritol 4-phosphate + NADP(+) = 1-deoxy-D-xylulose 5-phosphate + NADPH + H(+). The protein operates within isoprenoid biosynthesis; isopentenyl diphosphate biosynthesis via DXP pathway; isopentenyl diphosphate from 1-deoxy-D-xylulose 5-phosphate: step 1/6. Functionally, catalyzes the NADPH-dependent rearrangement and reduction of 1-deoxy-D-xylulose-5-phosphate (DXP) to 2-C-methyl-D-erythritol 4-phosphate (MEP). This is 1-deoxy-D-xylulose 5-phosphate reductoisomerase from Parasynechococcus marenigrum (strain WH8102).